A 718-amino-acid polypeptide reads, in one-letter code: Peroxisomal bifunctional enzyme (718 aa).

Residues methionine 1–serine 280 form an enoyl-CoA hydratase / isomerase region. Lysine 38 is modified (N6-succinyllysine). A substrate-binding site is contributed by glycine 99. Lysine 163 and lysine 172 each carry N6-acetyllysine; alternate. Lysine 163 and lysine 172 each carry N6-succinyllysine; alternate. Lysine 181 carries the N6-succinyllysine modification. N6-acetyllysine; alternate is present on residues lysine 189 and lysine 217. N6-succinyllysine; alternate is present on residues lysine 189 and lysine 217. An N6-succinyllysine modification is found at lysine 240. Lysine 248 carries the N6-acetyllysine modification. At lysine 252 the chain carries N6-succinyllysine. Lysine 274 bears the N6-acetyllysine; alternate mark. At lysine 274 the chain carries N6-succinyllysine; alternate. Lysine 278, lysine 288, and lysine 329 each carry N6-succinyllysine. A 3-hydroxyacyl-CoA dehydrogenase region spans residues threonine 281–glycine 567. N6-acetyllysine occurs at positions 344, 348, 355, and 459. An N6-succinyllysine modification is found at lysine 527. Threonine 543 carries the post-translational modification Phosphothreonine. At lysine 572 the chain carries N6-succinyllysine. Lysine 579, lysine 586, and lysine 705 each carry N6-acetyllysine; alternate. N6-succinyllysine; alternate occurs at positions 579, 586, and 705. Positions serine 716–leucine 718 match the Microbody targeting signal motif. Lysine 717 bears the N6-succinyllysine mark.

In the N-terminal section; belongs to the enoyl-CoA hydratase/isomerase family. The protein in the C-terminal section; belongs to the 3-hydroxyacyl-CoA dehydrogenase family. As to quaternary structure, monomer. In terms of processing, acetylated, leading to enhanced enzyme activity. Acetylation is enhanced by up to 80% after treatment either with trichostin A (TCA) or with nicotinamide (NAM) with highest increase on Lys-344. Acetylation and enzyme activity increased by about 1.5% on addition of fatty acids.

It localises to the peroxisome. It catalyses the reaction a (3S)-3-hydroxyacyl-CoA = a (2E)-enoyl-CoA + H2O. The catalysed reaction is a 4-saturated-(3S)-3-hydroxyacyl-CoA = a (3E)-enoyl-CoA + H2O. The enzyme catalyses a (3Z)-enoyl-CoA = a 4-saturated (2E)-enoyl-CoA. It carries out the reaction a (3E)-enoyl-CoA = a 4-saturated (2E)-enoyl-CoA. It catalyses the reaction a (3S)-3-hydroxyacyl-CoA + NAD(+) = a 3-oxoacyl-CoA + NADH + H(+). The catalysed reaction is (2S,3S)-3-hydroxy-2-methylbutanoyl-CoA = (2E)-2-methylbut-2-enoyl-CoA + H2O. The enzyme catalyses (2E)-dodecenedioyl-CoA + H2O = (3S)-hydroxydodecanedioyl-CoA. It carries out the reaction (3S)-hydroxydodecanedioyl-CoA + NAD(+) = 3-oxododecanedioyl-CoA + NADH + H(+). It catalyses the reaction (2E)-octenedioyl-CoA + H2O = (3S)-hydroxyoctanedioyl-CoA. The catalysed reaction is (3S)-hydroxyoctanedioyl-CoA + NAD(+) = 3-oxooctanedioyl-CoA + NADH + H(+). The enzyme catalyses (2E)-decenedioyl-CoA + H2O = (3S)-hydroxydecanedioyl-CoA. It carries out the reaction (3S)-hydroxydecanedioyl-CoA + NAD(+) = 3-oxodecanedioyl-CoA + NADH + H(+). It catalyses the reaction (2E)-tetradecenedioyl-CoA + H2O = (3S)-hydroxytetradecanedioyl-CoA. The catalysed reaction is (3S)-hydroxytetradecanedioyl-CoA + NAD(+) = 3-oxotetradecanedioyl-CoA + NADH + H(+). The enzyme catalyses (3E,5Z)-tetradecadienoyl-CoA = (2E,5Z)-tetradecadienoyl-CoA. It carries out the reaction (3E,5Z)-octadienoyl-CoA = (2E,5Z)-octadienoyl-CoA. It catalyses the reaction (3S)-hydroxydecanoyl-CoA + NAD(+) = 3-oxodecanoyl-CoA + NADH + H(+). The catalysed reaction is (3E)-decenoyl-CoA = (2E)-decenoyl-CoA. The enzyme catalyses (3Z)-hexenoyl-CoA = (2E)-hexenoyl-CoA. It carries out the reaction (3E)-hexenoyl-CoA = (2E)-hexenoyl-CoA. It catalyses the reaction (3S)-hydroxydecanoyl-CoA = (2E)-decenoyl-CoA + H2O. The catalysed reaction is (3S)-hydroxyhexanoyl-CoA = (2E)-hexenoyl-CoA + H2O. The enzyme catalyses (3S)-hydroxyhexadecanoyl-CoA + NAD(+) = 3-oxohexadecanoyl-CoA + NADH + H(+). It carries out the reaction (3S)-hydroxyhexadecanoyl-CoA = (2E)-hexadecenoyl-CoA + H2O. It catalyses the reaction (2E)-hexadecenedioyl-CoA + H2O = (3S)-hydroxyhexadecanedioyl-CoA. The catalysed reaction is (3S)-hydroxyhexadecanedioyl-CoA + NAD(+) = 3-oxohexadecanedioyl-CoA + NADH + H(+). The protein operates within lipid metabolism; fatty acid beta-oxidation. Its activity is regulated as follows. Enzyme activity enhanced by acetylation. Its function is as follows. Peroxisomal trifunctional enzyme possessing 2-enoyl-CoA hydratase, 3-hydroxyacyl-CoA dehydrogenase, and delta 3, delta 2-enoyl-CoA isomerase activities. Catalyzes two of the four reactions of the long chain fatty acids peroxisomal beta-oxidation pathway. Can also use branched-chain fatty acids such as 2-methyl-2E-butenoyl-CoA as a substrate, which is hydrated into (2S,3S)-3-hydroxy-2-methylbutanoyl-CoA. Optimal isomerase for 2,5 double bonds into 3,5 form isomerization in a range of enoyl-CoA species. Also able to isomerize both 3-cis and 3-trans double bonds into the 2-trans form in a range of enoyl-CoA species. With HSD17B4, catalyzes the hydration of trans-2-enoyl-CoA and the dehydrogenation of 3-hydroxyacyl-CoA, but with opposite chiral specificity. Regulates the amount of medium-chain dicarboxylic fatty acids which are essential regulators of all fatty acid oxidation pathways. Also involved in the degradation of long-chain dicarboxylic acids through peroxisomal beta-oxidation. The sequence is that of Peroxisomal bifunctional enzyme from Mus musculus (Mouse).